We begin with the raw amino-acid sequence, 419 residues long: tRNA (guanine-N(7)-)-methyltransferase non-catalytic subunit wuho (419 aa).

Over residues 51–61 the composition is skewed to low complexity; the sequence is STAEQQSAAAE. Residues 51 to 75 are disordered; sequence STAEQQSAAAETGGGSVVEGEEPKD. 3 WD repeats span residues 87-127, 174-213, and 217-255; these read APTV…AQLV, GHLSIVYDILWTGDQQHIITSDRDDKIRVTNYPATFDIHS, and GHKEFVSGLALLSDEHICSVSGDKTLRVWNFKAGKELLR.

Belongs to the WD repeat TRM82 family. As to quaternary structure, forms a heterodimer with the catalytic subunit Mettl1. Interacts with mei-P26 and weakly interacts with bgcn; required for the function or formation of the mei-P26-bgcn-bam-sxl complex. Interacts with nanos; may be involved in mei-P26-dependent derepression of the BMP signaling pathway. Interacts with Myc; the interaction may be mediated by mei-P26 and may be involved in the regulation of ribosome biogenesis. As to expression, in testis, it is present at high level in hub cells, a niche for germline stem cells of testis. Ubiquitously expressed in all testicular cells throughout spermatogenesis. Ubiquitously expressed in all germline and somatic cells of the ovary.

The protein resides in the nucleus. Its subcellular location is the cytoplasm. The protein operates within tRNA modification; N(7)-methylguanine-tRNA biosynthesis. Its function is as follows. Required for the Mettl1-dependent formation of N(7)-methylguanine at position 46 (m7G46) in tRNA. In the Mettl1-wuho methyltransferase complex, it is required to stabilize and induce conformational changes of the catalytic subunit. Required for binding of nanos mRNA and repression of translation by the mei-P26-bgcn-bam-sxl complex. May cooperate with mei-P26 and nanos to derepress the BMP signaling pathway. May cooperate with mei-P26 to suppress expression of a subset of microRNAs. May cooperate with mei-P26 to regulate bam expression levels in germline cells during gametogenesis. Required to promote mitosis to meiosis transition during gametogenesis. May regulate germline cell division in part by regulating ribosome biogenesis. The polypeptide is tRNA (guanine-N(7)-)-methyltransferase non-catalytic subunit wuho (Drosophila willistoni (Fruit fly)).